The sequence spans 142 residues: Ribosome-binding factor A (142 aa).

Positions 119-142 (EAKQKQHGVETDAEQGDTKEEGDK) are disordered.

The protein belongs to the RbfA family. As to quaternary structure, monomer. Binds 30S ribosomal subunits, but not 50S ribosomal subunits or 70S ribosomes.

Its subcellular location is the cytoplasm. One of several proteins that assist in the late maturation steps of the functional core of the 30S ribosomal subunit. Associates with free 30S ribosomal subunits (but not with 30S subunits that are part of 70S ribosomes or polysomes). Required for efficient processing of 16S rRNA. May interact with the 5'-terminal helix region of 16S rRNA. This is Ribosome-binding factor A from Shewanella pealeana (strain ATCC 700345 / ANG-SQ1).